The sequence spans 164 residues: 6,7-dimethyl-8-ribityllumazine synthase 1 (164 aa).

5-amino-6-(D-ribitylamino)uracil-binding positions include F27, S58–E60, and T87–I89. D92–T93 is a binding site for (2S)-2-hydroxy-3-oxobutyl phosphate. The active-site Proton donor is H95. Residue N120 coordinates 5-amino-6-(D-ribitylamino)uracil. R134 serves as a coordination point for (2S)-2-hydroxy-3-oxobutyl phosphate.

This sequence belongs to the DMRL synthase family. As to quaternary structure, homopentamer.

It catalyses the reaction (2S)-2-hydroxy-3-oxobutyl phosphate + 5-amino-6-(D-ribitylamino)uracil = 6,7-dimethyl-8-(1-D-ribityl)lumazine + phosphate + 2 H2O + H(+). It participates in cofactor biosynthesis; riboflavin biosynthesis; riboflavin from 2-hydroxy-3-oxobutyl phosphate and 5-amino-6-(D-ribitylamino)uracil: step 1/2. Functionally, catalyzes the formation of 6,7-dimethyl-8-ribityllumazine by condensation of 5-amino-6-(D-ribitylamino)uracil with 3,4-dihydroxy-2-butanone 4-phosphate. This is the penultimate step in the biosynthesis of riboflavin. In Mesorhizobium japonicum (strain LMG 29417 / CECT 9101 / MAFF 303099) (Mesorhizobium loti (strain MAFF 303099)), this protein is 6,7-dimethyl-8-ribityllumazine synthase 1 (ribH1).